Reading from the N-terminus, the 54-residue chain is Large ribosomal subunit protein bL33 (54 aa).

Belongs to the bacterial ribosomal protein bL33 family.

This chain is Large ribosomal subunit protein bL33, found in Chloroflexus aurantiacus (strain ATCC 29366 / DSM 635 / J-10-fl).